Consider the following 266-residue polypeptide: GTP cyclohydrolase MptA (266 aa).

It belongs to the GTP cyclohydrolase IV family. As to quaternary structure, homodimer. Fe(2+) serves as cofactor.

It carries out the reaction GTP + H2O = 7,8-dihydroneopterin 2',3'-cyclic phosphate + formate + diphosphate + H(+). Its pathway is cofactor biosynthesis; 5,6,7,8-tetrahydromethanopterin biosynthesis. Functionally, converts GTP to 7,8-dihydro-D-neopterin 2',3'-cyclic phosphate, the first intermediate in the biosynthesis of coenzyme methanopterin. This chain is GTP cyclohydrolase MptA, found in Pyrococcus abyssi (strain GE5 / Orsay).